A 137-amino-acid polypeptide reads, in one-letter code: DNA-binding protein H-NS (137 aa).

Residues 112–117 mediate DNA binding; that stretch reads QGRTPA.

It belongs to the histone-like protein H-NS family. As to quaternary structure, homodimer that oligomerizes on DNA into higher-order complexes that form bridges between disparate regions of DNA compacting it. Interacts with Hha, Cnu and StpA.

The protein resides in the cytoplasm. Its subcellular location is the nucleoid. Functionally, a DNA-binding protein implicated in transcriptional repression and chromosome organization and compaction. Binds nucleation sites in AT-rich DNA and bridges them, forming higher-order nucleoprotein complexes and condensing the chromosome. As many horizontally transferred genes are AT-rich, it plays a central role in silencing foreign genes. A subset of genes are repressed by H-NS in association with other proteins. This Escherichia coli O6:H1 (strain CFT073 / ATCC 700928 / UPEC) protein is DNA-binding protein H-NS (hns).